A 208-amino-acid polypeptide reads, in one-letter code: Ribonuclease HII (208 aa).

An RNase H type-2 domain is found at 5–198 (PLIAGVDEVG…CQPRLEHDCR (194 aa)). D11, E12, and D106 together coordinate a divalent metal cation.

The protein belongs to the RNase HII family. Requires Mn(2+) as cofactor. Mg(2+) is required as a cofactor.

The protein localises to the cytoplasm. The catalysed reaction is Endonucleolytic cleavage to 5'-phosphomonoester.. Endonuclease that specifically degrades the RNA of RNA-DNA hybrids. This Microcystis aeruginosa (strain NIES-843 / IAM M-2473) protein is Ribonuclease HII.